Here is a 96-residue protein sequence, read N- to C-terminus: Nucleoid-associated protein TC_0612 (96 aa).

The protein belongs to the YbaB/EbfC family. As to quaternary structure, homodimer.

It is found in the cytoplasm. Its subcellular location is the nucleoid. Functionally, binds to DNA and alters its conformation. May be involved in regulation of gene expression, nucleoid organization and DNA protection. The protein is Nucleoid-associated protein TC_0612 of Chlamydia muridarum (strain MoPn / Nigg).